Here is a 316-residue protein sequence, read N- to C-terminus: Cilia-and flagella-associated protein 96 (316 aa).

The interval 220-242 is disordered; sequence EEKKEVSFKPFKPSSPGKKAGGM. Positions 227–237 are enriched in low complexity; it reads FKPFKPSSPGK.

Belongs to the CFAP96 family.

It localises to the cytoplasm. Its subcellular location is the cytoskeleton. It is found in the microtubule organizing center. The protein resides in the centrosome. The sequence is that of Cilia-and flagella-associated protein 96 (Cfap96) from Mus musculus (Mouse).